The primary structure comprises 505 residues: Mannosylglucosyl-3-phosphoglycerate synthase (505 aa).

As to quaternary structure, monomer in solution.

It carries out the reaction (2R)-2-O-(alpha-D-glucopyranosyl)-3-phospho-glycerate + GDP-alpha-D-mannose = (2R)-2-O-[alpha-D-mannopyranosyl-(1-&gt;2)-alpha-D-glucopyranosyl]-3-phospho-glycerate + GDP + H(+). Not strictly dependent on divalent cations, but the presence of Mn(2+), Ca(2+), Mg(2+) or Co(2+) stimulates activity. Functionally, involved in the biosynthesis of the compatible solute mannosylglucosylglycerate through a phosphorylating pathway. Catalyzes the conversion of glucosyl-3-phosphoglycerate (GPG) to mannosylglucosyl-3-phosphoglycerate (MGPG). This is Mannosylglucosyl-3-phosphoglycerate synthase from Petrotoga mobilis (strain DSM 10674 / SJ95).